The sequence spans 601 residues: Sulfite reductase [NADPH] flavoprotein alpha-component (601 aa).

The Flavodoxin-like domain maps to 64–202; it reads ITLISASQTG…AAQEWRARVV (139 aa). FMN-binding positions include 70–75, 117–120, and 153–162; these read SQTGNA, STQG, and LGDTSYEFFC. The region spanning 236–450 is the FAD-binding FR-type domain; sequence EAPLSASLAV…IEHNDNFRLP (215 aa). FAD-binding positions include Thr324, Ala358, 388-391, 406-408, Tyr412, and 421-424; these read RLYS, TVG, and GGAS. NADP(+) is bound by residues 521–522, 527–531, and Asp563; these read SR and KIYVQ. Tyr601 is an FAD binding site.

It belongs to the NADPH-dependent sulphite reductase flavoprotein subunit CysJ family. This sequence in the N-terminal section; belongs to the flavodoxin family. The protein in the C-terminal section; belongs to the flavoprotein pyridine nucleotide cytochrome reductase family. Alpha(8)-beta(8). The alpha component is a flavoprotein, the beta component is a hemoprotein. FAD serves as cofactor. Requires FMN as cofactor.

It carries out the reaction hydrogen sulfide + 3 NADP(+) + 3 H2O = sulfite + 3 NADPH + 4 H(+). The protein operates within sulfur metabolism; hydrogen sulfide biosynthesis; hydrogen sulfide from sulfite (NADPH route): step 1/1. Its function is as follows. Component of the sulfite reductase complex that catalyzes the 6-electron reduction of sulfite to sulfide. This is one of several activities required for the biosynthesis of L-cysteine from sulfate. The flavoprotein component catalyzes the electron flow from NADPH -&gt; FAD -&gt; FMN to the hemoprotein component. This Citrobacter koseri (strain ATCC BAA-895 / CDC 4225-83 / SGSC4696) protein is Sulfite reductase [NADPH] flavoprotein alpha-component.